Consider the following 266-residue polypeptide: Undecaprenyl-diphosphatase (266 aa).

Transmembrane regions (helical) follow at residues 1-21 (MTWL…FLPI), 39-59 (QGLA…MVYF), 87-107 (WAVI…DSWI), 111-131 (LRSA…LGMA), 143-163 (FTLK…IPGT), 186-206 (FSFL…GLEL), 217-237 (EIAG…HLFL), and 243-263 (IGFM…LVWL).

The protein belongs to the UppP family.

It localises to the cell inner membrane. It carries out the reaction di-trans,octa-cis-undecaprenyl diphosphate + H2O = di-trans,octa-cis-undecaprenyl phosphate + phosphate + H(+). Its function is as follows. Catalyzes the dephosphorylation of undecaprenyl diphosphate (UPP). Confers resistance to bacitracin. In Hahella chejuensis (strain KCTC 2396), this protein is Undecaprenyl-diphosphatase.